Reading from the N-terminus, the 307-residue chain is Cilia-and flagella-associated protein 96 (307 aa).

Disordered regions lie at residues 73 to 102 and 218 to 279; these read YSDPFKQRRQHRMQQSKKNLGKPFLPSSGE and HSQK…GPKT.

Belongs to the CFAP96 family.

The protein localises to the cytoplasm. The protein resides in the cytoskeleton. It is found in the microtubule organizing center. Its subcellular location is the centrosome. The chain is Cilia-and flagella-associated protein 96 (cfap96.L) from Xenopus laevis (African clawed frog).